The chain runs to 598 residues: Probable ATP-dependent RNA helicase DDX52 (598 aa).

The residue at position 15 (Lys-15) is an N6-acetyllysine. Ser-39 carries the post-translational modification Phosphoserine. Positions 166–194 (QLDQEYKINSRLLQNILDAGFQVPTPIQM) match the Q motif motif. In terms of domain architecture, Helicase ATP-binding spans 197–375 (IPVMLHGREL…KLNLDNVVSV (179 aa)). 210 to 217 (APTGSGKT) serves as a coordination point for ATP. Positions 319–322 (DESD) match the DEAD box motif. The Helicase C-terminal domain maps to 386-547 (TVEQELLFVG…PVPEYIKGFQ (162 aa)).

It belongs to the DEAD box helicase family. DDX52/ROK1 subfamily.

The protein resides in the nucleus. It is found in the nucleolus. It catalyses the reaction ATP + H2O = ADP + phosphate + H(+). Its function is as follows. Required for efficient ribosome biogenesis. May control cell cycle progression by regulating translation of mRNAs that contain a terminal oligo pyrimidine (TOP) motif in their 5' UTRs, such as GTPBP4. This is Probable ATP-dependent RNA helicase DDX52 (Ddx52) from Mus musculus (Mouse).